A 151-amino-acid chain; its full sequence is 3-hydroxyacyl-[acyl-carrier-protein] dehydratase FabZ (151 aa).

Histidine 54 is an active-site residue.

This sequence belongs to the thioester dehydratase family. FabZ subfamily.

The protein resides in the cytoplasm. It catalyses the reaction a (3R)-hydroxyacyl-[ACP] = a (2E)-enoyl-[ACP] + H2O. Involved in unsaturated fatty acids biosynthesis. Catalyzes the dehydration of short chain beta-hydroxyacyl-ACPs and long chain saturated and unsaturated beta-hydroxyacyl-ACPs. The sequence is that of 3-hydroxyacyl-[acyl-carrier-protein] dehydratase FabZ from Erwinia tasmaniensis (strain DSM 17950 / CFBP 7177 / CIP 109463 / NCPPB 4357 / Et1/99).